Reading from the N-terminus, the 952-residue chain is ALS2 C-terminal-like protein (952 aa).

MORN repeat units follow at residues 358–380 (YDGE…DGRN), 381–403 (HVGT…QASE), 409–431 (YKCH…TDEV), 432–454 (YKGY…PQAP), 459–481 (YTGH…DRGE), 483–505 (YIGM…AGVC), 506–528 (YQGT…DDSL), and 529–552 (YEGT…NGFT). In terms of domain architecture, VPS9 spans 795-941 (LFPDTKLLEF…IQKEDMRPHH (147 aa)).

As to quaternary structure, homodimer. Forms a heteromeric complex with ALS2. Interacts with ALS2 and RAB5A. In terms of tissue distribution, expressed in heart, lung, liver and kidney.

The protein resides in the cytoplasm. Its function is as follows. Acts as a guanine nucleotide exchange factor (GEF) for Rab5 GTPase. Regulates the ALS2-mediated endosome dynamics. The protein is ALS2 C-terminal-like protein (Als2cl) of Mus musculus (Mouse).